The sequence spans 130 residues: uncharacterized protein (130 aa).

A signal peptide spans 1–20; it reads MFNCLTKLVILVCLKYVAKA.

This is an uncharacterized protein from Saccharomyces cerevisiae (strain ATCC 204508 / S288c) (Baker's yeast).